The primary structure comprises 530 residues: Chaperonin GroEL, chloroplastic (530 aa).

ATP is bound by residues 29–32 (TLGP), 86–90 (DGTTT), glycine 414, 480–482 (DAL), and aspartate 496.

The protein belongs to the chaperonin (HSP60) family. Forms a cylinder of 14 subunits composed of two heptameric rings stacked back-to-back. Interacts with the co-chaperonin GroES.

The protein localises to the plastid. It localises to the chloroplast. The catalysed reaction is ATP + H2O + a folded polypeptide = ADP + phosphate + an unfolded polypeptide.. Functionally, together with its co-chaperonin GroES, plays an essential role in assisting protein folding. The GroEL-GroES system forms a nano-cage that allows encapsulation of the non-native substrate proteins and provides a physical environment optimized to promote and accelerate protein folding. The protein is Chaperonin GroEL, chloroplastic of Cyanidium caldarium (Red alga).